Consider the following 418-residue polypeptide: CinA-like protein (418 aa).

The protein belongs to the CinA family.

This is CinA-like protein from Leptospira interrogans serogroup Icterohaemorrhagiae serovar copenhageni (strain Fiocruz L1-130).